We begin with the raw amino-acid sequence, 235 residues long: NADH-quinone oxidoreductase subunit C (235 aa).

It belongs to the complex I 30 kDa subunit family. NDH-1 is composed of 14 different subunits. Subunits NuoB, C, D, E, F, and G constitute the peripheral sector of the complex.

It localises to the cell membrane. The enzyme catalyses a quinone + NADH + 5 H(+)(in) = a quinol + NAD(+) + 4 H(+)(out). NDH-1 shuttles electrons from NADH, via FMN and iron-sulfur (Fe-S) centers, to quinones in the respiratory chain. The immediate electron acceptor for the enzyme in this species is believed to be a menaquinone. Couples the redox reaction to proton translocation (for every two electrons transferred, four hydrogen ions are translocated across the cytoplasmic membrane), and thus conserves the redox energy in a proton gradient. This Mycobacterium avium (strain 104) protein is NADH-quinone oxidoreductase subunit C.